We begin with the raw amino-acid sequence, 309 residues long: ADP-L-glycero-D-manno-heptose-6-epimerase (309 aa).

NADP(+) is bound by residues phenylalanine 10–isoleucine 11, aspartate 31–asparagine 32, lysine 38, lysine 53, leucine 75–serine 79, and asparagine 92. The Proton acceptor role is filled by tyrosine 140. Lysine 144 is an NADP(+) binding site. Residue asparagine 169 participates in substrate binding. NADP(+) is bound by residues valine 170 and lysine 178. Lysine 178 acts as the Proton acceptor in catalysis. Substrate is bound by residues serine 180, histidine 187, phenylalanine 201–serine 204, arginine 209, and tyrosine 272.

It belongs to the NAD(P)-dependent epimerase/dehydratase family. HldD subfamily. Homopentamer. Requires NADP(+) as cofactor.

It catalyses the reaction ADP-D-glycero-beta-D-manno-heptose = ADP-L-glycero-beta-D-manno-heptose. The protein operates within nucleotide-sugar biosynthesis; ADP-L-glycero-beta-D-manno-heptose biosynthesis; ADP-L-glycero-beta-D-manno-heptose from D-glycero-beta-D-manno-heptose 7-phosphate: step 4/4. Its function is as follows. Catalyzes the interconversion between ADP-D-glycero-beta-D-manno-heptose and ADP-L-glycero-beta-D-manno-heptose via an epimerization at carbon 6 of the heptose. This chain is ADP-L-glycero-D-manno-heptose-6-epimerase, found in Hamiltonella defensa subsp. Acyrthosiphon pisum (strain 5AT).